Here is a 248-residue protein sequence, read N- to C-terminus: tRNA (guanine-N(1)-)-methyltransferase (248 aa).

S-adenosyl-L-methionine-binding positions include G113 and L133–L138.

Belongs to the RNA methyltransferase TrmD family. As to quaternary structure, homodimer.

The protein localises to the cytoplasm. The catalysed reaction is guanosine(37) in tRNA + S-adenosyl-L-methionine = N(1)-methylguanosine(37) in tRNA + S-adenosyl-L-homocysteine + H(+). Specifically methylates guanosine-37 in various tRNAs. The chain is tRNA (guanine-N(1)-)-methyltransferase from Albidiferax ferrireducens (strain ATCC BAA-621 / DSM 15236 / T118) (Rhodoferax ferrireducens).